A 484-amino-acid chain; its full sequence is Regulatory protein ViaA (484 aa).

This sequence belongs to the ViaA family. Homodimer. Interacts with RavA.

It is found in the cytoplasm. Functionally, component of the RavA-ViaA chaperone complex, which may act on the membrane to optimize the function of some of the respiratory chains. ViaA stimulates the ATPase activity of RavA. The protein is Regulatory protein ViaA of Edwardsiella ictaluri (strain 93-146).